The following is a 300-amino-acid chain: Alpha-ketoglutarate-dependent dioxygenase alkB homolog 4 (300 aa).

An N-acetylalanine modification is found at alanine 2. Residues 148–272 (PVEQCNLDYS…RVCATFRELS (125 aa)) form the Fe2OG dioxygenase domain. The Fe cation site is built by histidine 167, aspartate 169, and histidine 252. Arginine 263 contacts 2-oxoglutarate.

The protein belongs to the alkB family. As to quaternary structure, interacts with ZFHX3, MLLT3, MLLT1, HSF4, EP300, TES, EIF3C, MTMR6 and PSMA6. Fe(2+) serves as cofactor.

Its subcellular location is the cytoplasm. The protein localises to the nucleus. It is found in the nucleolus. The protein resides in the midbody. The catalysed reaction is an N(6)-methyl-2'-deoxyadenosine in DNA + 2-oxoglutarate + O2 = a 2'-deoxyadenosine in DNA + formaldehyde + succinate + CO2. It carries out the reaction N(6)-methyl-L-lysyl-[protein] + 2-oxoglutarate + O2 = L-lysyl-[protein] + formaldehyde + succinate + CO2. Dioxygenase that mediates demethylation of actin monomethylated at 'Lys-84' (K84me1), thereby acting as a regulator of actomyosin-processes. Demethylation of actin K84me1 is required for maintaining actomyosin dynamics supporting normal cleavage furrow ingression during cytokinesis and cell migration. In addition to proteins, also demethylates DNA: specifically demethylates DNA methylated on the 6th position of adenine (N(6)-methyladenosine) DNA, thereby regulating Polycomb silencing. The protein is Alpha-ketoglutarate-dependent dioxygenase alkB homolog 4 of Mus musculus (Mouse).